Reading from the N-terminus, the 344-residue chain is Geranylgeranyl pyrophosphate synthase 10, mitochondrial (344 aa).

The transit peptide at 1-40 (MENREVFVYIVISIFRSLQFLFWRFRPRYNDVTSALTRPL) directs the protein to the mitochondrion. The isopentenyl diphosphate site is built by lysine 91, arginine 94, and histidine 123. Mg(2+) contacts are provided by aspartate 130 and aspartate 136. Arginine 141 contributes to the dimethylallyl diphosphate binding site. Arginine 142 is an isopentenyl diphosphate binding site. The dimethylallyl diphosphate site is built by lysine 229, threonine 230, glutamine 267, lysine 284, and lysine 294.

This sequence belongs to the FPP/GGPP synthase family. In terms of assembly, monomer. Requires Mg(2+) as cofactor.

The protein resides in the mitochondrion. The enzyme catalyses isopentenyl diphosphate + dimethylallyl diphosphate = (2E)-geranyl diphosphate + diphosphate. It catalyses the reaction isopentenyl diphosphate + (2E)-geranyl diphosphate = (2E,6E)-farnesyl diphosphate + diphosphate. The catalysed reaction is isopentenyl diphosphate + (2E,6E)-farnesyl diphosphate = (2E,6E,10E)-geranylgeranyl diphosphate + diphosphate. It functions in the pathway isoprenoid biosynthesis; farnesyl diphosphate biosynthesis; farnesyl diphosphate from geranyl diphosphate and isopentenyl diphosphate: step 1/1. It participates in isoprenoid biosynthesis; geranyl diphosphate biosynthesis; geranyl diphosphate from dimethylallyl diphosphate and isopentenyl diphosphate: step 1/1. The protein operates within isoprenoid biosynthesis; geranylgeranyl diphosphate biosynthesis; geranylgeranyl diphosphate from farnesyl diphosphate and isopentenyl diphosphate: step 1/1. Its function is as follows. Catalyzes the trans-addition of the three molecules of IPP onto DMAPP to form geranylgeranyl pyrophosphate. This is Geranylgeranyl pyrophosphate synthase 10, mitochondrial from Arabidopsis thaliana (Mouse-ear cress).